A 447-amino-acid polypeptide reads, in one-letter code: UPF0210 protein lp_2507 (447 aa).

It belongs to the UPF0210 family. As to quaternary structure, homodimer.

This Lactiplantibacillus plantarum (strain ATCC BAA-793 / NCIMB 8826 / WCFS1) (Lactobacillus plantarum) protein is UPF0210 protein lp_2507.